An 84-amino-acid polypeptide reads, in one-letter code: uncharacterized protein (84 aa).

Belongs to the csb family.

This is an uncharacterized protein from Dictyostelium discoideum (Social amoeba).